The primary structure comprises 423 residues: Osteomodulin (423 aa).

Positions 1–20 are cleaved as a signal peptide; that stretch reads MGFLSPIYVLFFCFGVRVYC. 6 positions are modified to sulfotyrosine: Y22, Y25, Y31, Y39, Y51, and Y77. Residues 53 to 91 form the LRRNT domain; sequence VPFYNNILGCAKECFCPTNFPTSMYCDNRKLKTIPIIPM. LRR repeat units follow at residues 92–113, 116–129, 142–164, 165–184, 187–207, 213–233, 234–255, 258–279, 281–294, 301–322, and 331–353; these read HIQQ…SFIN, HLKE…KIKS, NLQQ…PKSL, ERLL…AMDG, NVTM…KEKT, KLMQ…GLPS, SLMY…YFDK, KLHA…IFNL, NLIE…KLKQ, NLEH…MICP, and HLTY…IFFC. 2 N-linked (GlcNAc...) asparagine glycosylation sites follow: N113 and N121. Residue N187 is glycosylated (N-linked (GlcNAc...) asparagine). Residues N242 and N278 are each glycosylated (N-linked (GlcNAc...) asparagine). An N-linked (GlcNAc...) asparagine glycan is attached at N316. C321 and C353 are disulfide-bonded. The interval 381–406 is disordered; the sequence is RSYQEEEEEDDHDSQDNTLEGQEVSD. 2 positions are modified to sulfotyrosine: Y413 and Y414.

It belongs to the small leucine-rich proteoglycan (SLRP) family. SLRP class II subfamily. In terms of assembly, binds the alpha(V)beta(3)-integrin. Post-translationally, glycosylated; contains keratan sulfate. In terms of tissue distribution, bone specific.

It is found in the secreted. The protein localises to the extracellular space. It localises to the extracellular matrix. Its function is as follows. May be implicated in biomineralization processes. Has a function in binding of osteoblasts via the alpha(V)beta(3)-integrin. This is Osteomodulin (Omd) from Mus musculus (Mouse).